Consider the following 612-residue polypeptide: Threonine--tRNA ligase (612 aa).

The segment at 218–509 is catalytic; that stretch reads NHRKLGVELG…LSEHFGGNFP (292 aa). The Zn(2+) site is built by Cys-310, His-361, and His-486.

It belongs to the class-II aminoacyl-tRNA synthetase family. As to quaternary structure, homodimer. The cofactor is Zn(2+).

Its subcellular location is the cytoplasm. The enzyme catalyses tRNA(Thr) + L-threonine + ATP = L-threonyl-tRNA(Thr) + AMP + diphosphate + H(+). Catalyzes the attachment of threonine to tRNA(Thr) in a two-step reaction: L-threonine is first activated by ATP to form Thr-AMP and then transferred to the acceptor end of tRNA(Thr). Also edits incorrectly charged L-seryl-tRNA(Thr). The protein is Threonine--tRNA ligase of Helicobacter pylori (strain Shi470).